The following is a 273-amino-acid chain: Bis(5'-nucleosyl)-tetraphosphatase, symmetrical (273 aa).

The protein belongs to the Ap4A hydrolase family.

It carries out the reaction P(1),P(4)-bis(5'-adenosyl) tetraphosphate + H2O = 2 ADP + 2 H(+). Hydrolyzes diadenosine 5',5'''-P1,P4-tetraphosphate to yield ADP. This chain is Bis(5'-nucleosyl)-tetraphosphatase, symmetrical, found in Histophilus somni (strain 2336) (Haemophilus somnus).